The primary structure comprises 639 residues: Threonine--tRNA ligase (639 aa).

A TGS domain is found at 1 to 61 (MIHITLPDGS…TQDSPLSIVT (61 aa)). The segment at 242 to 533 (DHRKLGRELD…LIEEHAGALP (292 aa)) is catalytic. Positions 333, 384, and 510 each coordinate Zn(2+).

It belongs to the class-II aminoacyl-tRNA synthetase family. In terms of assembly, homodimer. Zn(2+) serves as cofactor.

Its subcellular location is the cytoplasm. It carries out the reaction tRNA(Thr) + L-threonine + ATP = L-threonyl-tRNA(Thr) + AMP + diphosphate + H(+). Functionally, catalyzes the attachment of threonine to tRNA(Thr) in a two-step reaction: L-threonine is first activated by ATP to form Thr-AMP and then transferred to the acceptor end of tRNA(Thr). Also edits incorrectly charged L-seryl-tRNA(Thr). This Acidovorax ebreus (strain TPSY) (Diaphorobacter sp. (strain TPSY)) protein is Threonine--tRNA ligase.